A 572-amino-acid polypeptide reads, in one-letter code: MRNTVLNTLNAFPTQLGSNKSTLSSKIFHSYLGVLRPPTPLNTSMEVLGEGAHQNREAKRSSLRFEFCSALKECQKGKVPFGSSLRLEAAENLTFECETGNYHTFCPISCVRWLYQQIADSFFLVIGTKTCGYFLQNAMGVMIFAEPRYAMAELEEGDIAAQLNDYKELKRLCLQIKHDRNPSVIVWIGTCTTEIIKMDLENLAKLIEAELKVPIVVARANGLDYAFTQGEDTVLASLVNRCPSSHESSLDSMKLPSGGREKQINDVNTSKPEGYLSEVISLTSNGDDINKKSCTKPVPKKSLVLFGSVPNSVQTQLTLELAKQGINVDGWLPSRYSELPVLNKDVYVCGINPFLSRTATSLMRRRKCHLISAPFPIGPDGTRRWIEKICTVLNTDKSSTSLEEVQKNLQQREEKVWKSLQSYLDLVKKKSVFFMGDNLLEISLARFFIRCGMIVYEIGIPYMDRRYQAAELALLEQTCLEMNVPLPRIVEKPDNYNQIQRIRELQPDIVVTGLAHSNPLEARGVTTKWSTEFTFAQIHGFANSRDVLELITRPVRRNQNLDALGFTSLVKN.

[4Fe-4S] cluster-binding residues include Cys-106, Cys-131, and Cys-191. The segment at 249-268 is disordered; the sequence is SLDSMKLPSGGREKQINDVN.

The protein belongs to the BchN/ChlN family. As to quaternary structure, protochlorophyllide reductase is composed of three subunits; ChlL, ChlN and ChlB. Forms a heterotetramer of two ChlB and two ChlN subunits. It depends on [4Fe-4S] cluster as a cofactor.

It is found in the plastid. The protein resides in the chloroplast. The enzyme catalyses chlorophyllide a + oxidized 2[4Fe-4S]-[ferredoxin] + 2 ADP + 2 phosphate = protochlorophyllide a + reduced 2[4Fe-4S]-[ferredoxin] + 2 ATP + 2 H2O. It functions in the pathway porphyrin-containing compound metabolism; chlorophyll biosynthesis (light-independent). Functionally, component of the dark-operative protochlorophyllide reductase (DPOR) that uses Mg-ATP and reduced ferredoxin to reduce ring D of protochlorophyllide (Pchlide) to form chlorophyllide a (Chlide). This reaction is light-independent. The NB-protein (ChlN-ChlB) is the catalytic component of the complex. The polypeptide is Light-independent protochlorophyllide reductase subunit N (Oltmannsiellopsis viridis (Marine flagellate)).